A 386-amino-acid chain; its full sequence is LL-diaminopimelate aminotransferase (386 aa).

Residues Tyr-13 and Gly-38 each contribute to the substrate site. Pyridoxal 5'-phosphate-binding positions include Tyr-67, 101–102 (SK), Tyr-126, Asn-176, Tyr-207, and 235–237 (SLS). Substrate is bound by residues Lys-102, Tyr-126, and Asn-176. Lys-238 bears the N6-(pyridoxal phosphate)lysine mark. A pyridoxal 5'-phosphate-binding site is contributed by Arg-246. Arg-364 serves as a coordination point for substrate.

Belongs to the class-I pyridoxal-phosphate-dependent aminotransferase family. LL-diaminopimelate aminotransferase subfamily. As to quaternary structure, homodimer. Requires pyridoxal 5'-phosphate as cofactor.

The enzyme catalyses (2S,6S)-2,6-diaminopimelate + 2-oxoglutarate = (S)-2,3,4,5-tetrahydrodipicolinate + L-glutamate + H2O + H(+). The protein operates within amino-acid biosynthesis; L-lysine biosynthesis via DAP pathway; LL-2,6-diaminopimelate from (S)-tetrahydrodipicolinate (aminotransferase route): step 1/1. Its function is as follows. Involved in the synthesis of meso-diaminopimelate (m-DAP or DL-DAP), required for both lysine and peptidoglycan biosynthesis. Catalyzes the direct conversion of tetrahydrodipicolinate to LL-diaminopimelate. In Natranaerobius thermophilus (strain ATCC BAA-1301 / DSM 18059 / JW/NM-WN-LF), this protein is LL-diaminopimelate aminotransferase.